Reading from the N-terminus, the 99-residue chain is uncharacterized protein (99 aa).

This is an uncharacterized protein from Caenorhabditis elegans.